Consider the following 297-residue polypeptide: HTH-type transcriptional regulator ArgP (297 aa).

The 57-residue stretch at 4–60 (PDYRTLQALDAVIRERGFERAAQKLCITQSAVSQRIKQLENMFGQPLLVRTVPPRPT) folds into the HTH lysR-type domain. A DNA-binding region (H-T-H motif) is located at residues 21–40 (FERAAQKLCITQSAVSQRIK).

The protein belongs to the LysR transcriptional regulatory family. Homodimer.

In terms of biological role, controls the transcription of genes involved in arginine and lysine metabolism. The protein is HTH-type transcriptional regulator ArgP of Salmonella arizonae (strain ATCC BAA-731 / CDC346-86 / RSK2980).